A 1610-amino-acid polypeptide reads, in one-letter code: Voltage-dependent L-type calcium channel subunit alpha-1D (1610 aa).

The tract at residues 1-99 (MMMMMMKKMQ…SKKQGNSSNS (99 aa)) is disordered. Topologically, residues 1 to 125 (MMMMMMKKMQ…RACISIVEWK (125 aa)) are cytoplasmic. A compositionally biased stretch (polar residues) spans 37–51 (GPTSQPNSSKQTVLS). Residues 53–66 (QAAIDAARQAKAAQ) show a composition bias toward low complexity. The span at 81–92 (QRKRQQYAKSKK) shows a compositional bias: basic residues. An I repeat occupies 112–408 (NPIRRACISI…LVLGVLSGEF (297 aa)). A helical transmembrane segment spans residues 126–144 (PFDIFILLAIFANCVALAI). The Extracellular segment spans residues 145-162 (YIPFPEDDSNSTNHNLEK). N154 carries N-linked (GlcNAc...) asparagine glycosylation. Residues 163–182 (VEYAFLIIFTVETFLKIIAY) traverse the membrane as a helical segment. Residues 183–194 (GLLLHPNAYVRN) lie on the Cytoplasmic side of the membrane. The helical transmembrane segment at 195-213 (GWNLLDFVIVIVGLFSVIL) threads the bilayer. The Extracellular segment spans residues 214-234 (EQLTKETEGGNHSSGKSGGFD). Residue N224 is glycosylated (N-linked (GlcNAc...) asparagine). A helical transmembrane segment spans residues 235–253 (VKALRAFRVLRPLRLVSGV). The Cytoplasmic segment spans residues 254 to 272 (PSLQVVLNSIIKAMVPLLH). The chain crosses the membrane as a helical span at residues 273–292 (IALLVLFVIIIYAIIGLELF). The Extracellular segment spans residues 293 to 380 (IGKMHKTCFF…WMNDAMGFEL (88 aa)). A glycan (N-linked (GlcNAc...) asparagine) is linked at N328. E363 provides a ligand contact to Ca(2+). The chain crosses the membrane as a helical span at residues 381 to 405 (PWVYFVSLVIFGSFFVLNLVLGVLS). Topologically, residues 406-522 (GEFSKEREKA…RRCRAAVKSV (117 aa)) are cytoplasmic. The segment at 428–445 (EQLEEDLKGYLDWITQAE) is binding to the beta subunit. Residues 448–487 (DPENEEEGGEEGKRNTSMPTSETESVNTENVSGEGETQGS) are disordered. Residues 462 to 487 (NTSMPTSETESVNTENVSGEGETQGS) are compositionally biased toward polar residues. The stretch at 508–754 (NRFNRRRCRA…VFLAIAVDNL (247 aa)) is one II repeat. Residues 523–542 (TFYWLVIVLVFLNTLTISSE) form a helical membrane-spanning segment. Over 543-557 (HYNQPDWLTQIQDIA) the chain is Extracellular. Residues 558 to 576 (NKVLLALFTCEMLVKMYSL) form a helical membrane-spanning segment. Topologically, residues 577-584 (GLQAYFVS) are cytoplasmic. The chain crosses the membrane as a helical span at residues 585-603 (LFNRFDCFVVCGGITETIL). Residues 604-613 (VELELMSPLG) are Extracellular-facing. The chain crosses the membrane as a helical span at residues 614–632 (VSVFRCVRLLRIFKVTRHW). Residues 633–651 (TSLSNLVASLLNSMKSIAS) lie on the Cytoplasmic side of the membrane. A helical transmembrane segment spans residues 652–672 (LLLLLFLFIIIFSLLGMQLFG). Topologically, residues 673–726 (GKFNFDETQTKRSTFDNFPQALLTVFQILTGEDWNAVMYDGIMAYGGPSSSGMI) are extracellular. Position 704 (E704) interacts with Ca(2+). The chain crosses the membrane as a helical span at residues 727–751 (VCIYFIILFICGNYILLNVFLAIAV). Over 752-884 (DNLADAESLN…VGCHKLINHH (133 aa)) the chain is Cytoplasmic. Residues 765 to 789 (KEEAEEKERKKIARKESLENKKNNK) are compositionally biased toward basic and acidic residues. Residues 765-846 (KEEAEEKERK…VPAGPRPRRI (82 aa)) form a disordered region. Over residues 790–801 (PEVNQIANSDNK) the composition is skewed to polar residues. Over residues 824 to 836 (VGEEEEEEEEEPE) the composition is skewed to acidic residues. Residues 871–1153 (NPIRVGCHKL…IFVGFVIVTF (283 aa)) form an III repeat. Residues 885–903 (IFTNLILVFIMLSSAALAA) traverse the membrane as a helical segment. Topologically, residues 904-919 (EDPIRSHSFRNTILGY) are extracellular. Residues 920 to 939 (FDYAFTAIFTVEILLKMTTF) traverse the membrane as a helical segment. Topologically, residues 940–951 (GAFLHKGAFCRN) are cytoplasmic. Residues 952–970 (YFNLLDMLVVGVSLVSFGI) form a helical membrane-spanning segment. The Extracellular portion of the chain corresponds to 971 to 976 (QSSAIS). The helical transmembrane segment at 977-996 (VVKILRVLRVLRPLRAINRA) threads the bilayer. The Cytoplasmic portion of the chain corresponds to 997–1015 (KGLKHVVQCVFVAIRTIGN). A helical membrane pass occupies residues 1016 to 1035 (IMIVTTLLQFMFACIGVQLF). Over 1036 to 1125 (KGKFYRCTDE…AGPVYNHRVE (90 aa)) the chain is Extracellular. The tract at residues 1073 to 1163 (RIWQNSDFNF…QEQGEKEYKN (91 aa)) is dihydropyridine binding. Ca(2+) is bound at residue E1099. The helical transmembrane segment at 1126 to 1146 (ISIFFIIYIIIVAFFMMNIFV) threads the bilayer. The Cytoplasmic portion of the chain corresponds to 1147-1203 (GFVIVTFQEQGEKEYKNCELDKNQRQCVEYALKARPLRRYIPKNPYQYKFWYVVNSS). The IV repeat unit spans residues 1190 to 1465 (NPYQYKFWYV…LFVAVIMDNF (276 aa)). Residues 1204–1222 (PFEYMMFVLIMLNTLCLAM) form a helical membrane-spanning segment. At 1223-1237 (QHYEQSKMFNDAMDI) the chain is on the extracellular side. Residues 1238-1257 (LNMVFTGVFTVEMVLKVIAF) form a helical membrane-spanning segment. Topologically, residues 1258-1264 (KPKGYFS) are cytoplasmic. Residues 1265–1286 (DAWNTFDSLIVIGSIIDVALSE) traverse the membrane as a helical segment. Over 1287-1311 (ADPTESESLPLPTATPGNSEESNRI) the chain is Extracellular. The helical transmembrane segment at 1312-1331 (SITFFRLFRVMRLVKLLSRG) threads the bilayer. Residues 1332–1350 (EGIRTLLWTFIKSFQALPY) lie on the Cytoplasmic side of the membrane. A helical transmembrane segment spans residues 1351-1370 (VALLIAMLFFIYAVIGMQMF). The Extracellular portion of the chain corresponds to 1371 to 1437 (GKVAMRDNNQ…GEEYTCGSNF (67 aa)). Residues 1418–1484 (LCDPDSDYNP…LGPHHLDEFK (67 aa)) form a dihydropyridine binding region. The segment at 1430-1473 (EYTCGSNFAIVYFISFYMLCAFLIINLFVAVIMDNFDYLTRDWS) is phenylalkylamine binding. Residues 1438-1462 (AIVYFISFYMLCAFLIINLFVAVIM) form a helical membrane-spanning segment. Residues 1463–1610 (DNFDYLTRDW…CFLSPSRSRS (148 aa)) are Cytoplasmic-facing.

This sequence belongs to the calcium channel alpha-1 subunit (TC 1.A.1.11) family. CACNA1D subfamily. Voltage-dependent calcium channels are multisubunit complexes, consisting of alpha-1, alpha-2, beta and delta subunits in a 1:1:1:1 ratio. The channel activity is directed by the pore-forming and voltage-sensitive alpha-1 subunit. In many cases, this subunit is sufficient to generate voltage-sensitive calcium channel activity. The auxiliary subunits beta and alpha-2/delta linked by a disulfide bridge regulate the channel activity. Interacts with RIMBP2. Interacts with CABP1 and CABP4, resulting in a near elimination of calcium-dependent inactivation of the channel. Expressed in brain, heart and skeletal muscle.

It is found in the membrane. It catalyses the reaction Ca(2+)(in) = Ca(2+)(out). Voltage-sensitive calcium channels (VSCC) mediate the entry of calcium ions into excitable cells and are also involved in a variety of calcium-dependent processes, including muscle contraction, hormone or neurotransmitter release, gene expression, cell motility, cell division and cell death. The isoform alpha-1D gives rise to L-type calcium currents. Long-lasting (L-type) calcium channels belong to the 'high-voltage activated' (HVA) group. They are blocked by dihydropyridines (DHP), phenylalkylamines, and by benzothiazepines. This is Voltage-dependent L-type calcium channel subunit alpha-1D (CACNA1D) from Mesocricetus auratus (Golden hamster).